A 594-amino-acid chain; its full sequence is Parathyroid hormone/parathyroid hormone-related peptide receptor (594 aa).

Residues 1 to 28 (MGTARIAPGLALLLCCPVLSSAYALVDA) form the signal peptide. At 29–188 (DDVMTKEEQI…TREREVFDRL (160 aa)) the chain is on the extracellular side. Disulfide bonds link Cys48–Cys117, Cys108–Cys149, and Cys132–Cys171. Positions 66 to 102 (DKGWTSASTSGKPRKDKASGKLYPESEEDKEAPTDSR) are disordered. Asn152, Asn162, Asn167, and Asn177 each carry an N-linked (GlcNAc...) asparagine glycan. Residues 189 to 209 (GMIYTVGYSMSLASLTVAVLI) form a helical membrane-spanning segment. Topologically, residues 210–223 (LAYFRRLHCTRNYI) are cytoplasmic. The helical transmembrane segment at 224–244 (HMHLFLSFMLRAVSIFVKDAV) threads the bilayer. Residues 245–295 (LYSGATLDEAERLTEEELRAIAQAPPPPATAAAGYAGCRVAVTFFLYFLAT) lie on the Extracellular side of the membrane. Residues 296–316 (NYYWILVEGLYLHSLIFMAFF) traverse the membrane as a helical segment. At 317–319 (SEK) the chain is on the cytoplasmic side. A helical transmembrane segment spans residues 320 to 340 (KYLWGFTVFGWGLPAVFVAVW). The Extracellular portion of the chain corresponds to 341–361 (VSVRATLANTGCWDLSSGNKK). The helical transmembrane segment at 362 to 382 (WIIQVPILASIVLHFILFINI) threads the bilayer. Topologically, residues 383-405 (VRVLATKLRETNAGRCDTRQQYR) are cytoplasmic. The helical transmembrane segment at 406–426 (KLLKSTLVLMPLFGVHYIVFM) threads the bilayer. The Extracellular portion of the chain corresponds to 427–440 (ATPYTEVSGTLWQV). A helical transmembrane segment spans residues 441–461 (QMHYEMLFNSFQGFFVAIIYC). At 462–594 (FCNGEVQAEI…LLQEEWETVM (133 aa)) the chain is on the cytoplasmic side. An Important for interaction with G proteins motif is present at residues 475–478 (WSRW). Residues 525–594 (PTATTNGHPQ…LLQEEWETVM (70 aa)) are disordered. Over residues 543-558 (TPALETLETTPPATAA) the composition is skewed to low complexity. The residue at position 552 (Thr552) is a Phosphothreonine.

This sequence belongs to the G-protein coupled receptor 2 family. In terms of assembly, homodimer in the absence of bound ligand. Peptide hormone binding leads to dissociation of the homodimer. Post-translationally, N-glycosylated.

It localises to the cell membrane. In terms of biological role, G-protein-coupled receptor for parathyroid hormone (PTH) and for parathyroid hormone-related peptide (PTHLH). Ligand binding causes a conformation change that triggers signaling via guanine nucleotide-binding proteins (G proteins) and modulates the activity of downstream effectors, such as adenylate cyclase (cAMP). PTH1R is coupled to G(s) G alpha proteins and mediates activation of adenylate cyclase activity. PTHLH dissociates from PTH1R more rapidly than PTH; as consequence, the cAMP response induced by PTHLH decays faster than the response induced by PTH. The polypeptide is Parathyroid hormone/parathyroid hormone-related peptide receptor (PTH1R) (Pongo abelii (Sumatran orangutan)).